Reading from the N-terminus, the 151-residue chain is MVKVESFELDHTKVKAPYVRKAGIKIGPKGDIVSKFDLRFVQPNKELLSDKGMHTLEHFLAGFMREKLDDVIDISPMGCKTGFYLTSFGDINVKDIIEALEYSLSKVLEQEEIPAANELQCGSAKLHSLELAKSHAKQVLENGISDKFYVE.

Fe cation contacts are provided by histidine 54, histidine 58, and cysteine 121.

It belongs to the LuxS family. In terms of assembly, homodimer. Fe cation serves as cofactor.

It catalyses the reaction S-(5-deoxy-D-ribos-5-yl)-L-homocysteine = (S)-4,5-dihydroxypentane-2,3-dione + L-homocysteine. Functionally, involved in the synthesis of autoinducer 2 (AI-2) which is secreted by bacteria and is used to communicate both the cell density and the metabolic potential of the environment. The regulation of gene expression in response to changes in cell density is called quorum sensing. Catalyzes the transformation of S-ribosylhomocysteine (RHC) to homocysteine (HC) and 4,5-dihydroxy-2,3-pentadione (DPD). In Clostridium perfringens (strain ATCC 13124 / DSM 756 / JCM 1290 / NCIMB 6125 / NCTC 8237 / Type A), this protein is S-ribosylhomocysteine lyase.